The sequence spans 1038 residues: TonB-dependent receptor P39 (1038 aa).

Positions 1 to 39 (MFKQKLKMKPKIKRNCTFSGLAFILMLLFSSFTVNNLNA) are cleaved as a signal peptide. Residues 120-127 (DEVVVIGY) carry the TonB box motif. The 113-residue stretch at 131 to 243 (KRADVIGAVG…ANGVVLITTK (113 aa)) folds into the TBDR plug domain. In terms of domain architecture, TBDR beta-barrel spans 249 to 1038 (FPKMTVDYIS…EIVIGLNVEF (790 aa)). A TonB C-terminal box motif is present at residues 1021–1038 (SLRYPNQTEIVIGLNVEF).

This sequence belongs to the TonB-dependent receptor family.

The protein resides in the cell outer membrane. Its function is as follows. TonB-dependent receptor probably involved in ulvan degradation. Ulvan is the main polysaccharide component of the Ulvales (green seaweed) cell wall. It is composed of disaccharide building blocks comprising 3-sulfated rhamnose (Rha3S) linked to D-glucuronic acid (GlcA), L-iduronic acid (IduA), or D-xylose (Xyl). The TonB-dependent receptor may mediate transport of ulvan oligosaccharides from the surface of the outer membrane to the periplasm for subsequent degradation. This Formosa agariphila (strain DSM 15362 / KCTC 12365 / LMG 23005 / KMM 3901 / M-2Alg 35-1) protein is TonB-dependent receptor P39.